The primary structure comprises 581 residues: Lipoprotein LpqB (581 aa).

The N-terminal stretch at 1–23 is a signal peptide; sequence MRNHVSRYLTALIAVGCAATTAA. C24 is lipidated: N-palmitoyl cysteine. The S-diacylglycerol cysteine moiety is linked to residue C24.

Belongs to the LpqB lipoprotein family.

Its subcellular location is the cell membrane. The sequence is that of Lipoprotein LpqB from Corynebacterium diphtheriae (strain ATCC 700971 / NCTC 13129 / Biotype gravis).